The following is a 139-amino-acid chain: Ribosomal RNA large subunit methyltransferase H (139 aa).

S-adenosyl-L-methionine is bound by residues Leu-56, Gly-88, and Leu-107–Phe-112.

The protein belongs to the RNA methyltransferase RlmH family. Homodimer.

It localises to the cytoplasm. It carries out the reaction pseudouridine(1915) in 23S rRNA + S-adenosyl-L-methionine = N(3)-methylpseudouridine(1915) in 23S rRNA + S-adenosyl-L-homocysteine + H(+). Functionally, specifically methylates the pseudouridine at position 1915 (m3Psi1915) in 23S rRNA. The protein is Ribosomal RNA large subunit methyltransferase H of Coprothermobacter proteolyticus (strain ATCC 35245 / DSM 5265 / OCM 4 / BT).